Consider the following 168-residue polypeptide: Shikimate kinase (168 aa).

Residue 12–17 (GAGKST) participates in ATP binding. A Mg(2+)-binding site is contributed by S16. Substrate-binding residues include D34, R58, and G80. Position 117 (R117) interacts with ATP. Position 136 (R136) interacts with substrate. R153 serves as a coordination point for ATP.

This sequence belongs to the shikimate kinase family. As to quaternary structure, monomer. Requires Mg(2+) as cofactor.

It localises to the cytoplasm. The enzyme catalyses shikimate + ATP = 3-phosphoshikimate + ADP + H(+). It participates in metabolic intermediate biosynthesis; chorismate biosynthesis; chorismate from D-erythrose 4-phosphate and phosphoenolpyruvate: step 5/7. Functionally, catalyzes the specific phosphorylation of the 3-hydroxyl group of shikimic acid using ATP as a cosubstrate. This is Shikimate kinase from Rhodococcus jostii (strain RHA1).